The sequence spans 102 residues: Apolipoprotein A-II (102 aa).

The first 18 residues, 1–18, serve as a signal peptide directing secretion; that stretch reads MKLLAMVALLVTICSLEG. Met-49 is modified (methionine sulfoxide).

This sequence belongs to the apolipoprotein A2 family. As to quaternary structure, monomer. Interacts with NAXE and NDRG1. In terms of tissue distribution, plasma.

It localises to the secreted. In terms of biological role, may stabilize HDL (high density lipoprotein) structure by its association with lipids, and affect the HDL metabolism. The sequence is that of Apolipoprotein A-II (Apoa2) from Rattus norvegicus (Rat).